Reading from the N-terminus, the 282-residue chain is Acetyl-coenzyme A carboxylase carboxyl transferase subunit beta (282 aa).

The CoA carboxyltransferase N-terminal domain occupies 26–282 (GLWHQTPTGK…VSKTVKLLVH (257 aa)).

The protein belongs to the AccD/PCCB family. Acetyl-CoA carboxylase is a heterohexamer composed of biotin carboxyl carrier protein (AccB), biotin carboxylase (AccC) and two subunits each of ACCase subunit alpha (AccA) and ACCase subunit beta (AccD).

The protein localises to the cytoplasm. It carries out the reaction N(6)-carboxybiotinyl-L-lysyl-[protein] + acetyl-CoA = N(6)-biotinyl-L-lysyl-[protein] + malonyl-CoA. It participates in lipid metabolism; malonyl-CoA biosynthesis; malonyl-CoA from acetyl-CoA: step 1/1. Component of the acetyl coenzyme A carboxylase (ACC) complex. Biotin carboxylase (BC) catalyzes the carboxylation of biotin on its carrier protein (BCCP) and then the CO(2) group is transferred by the transcarboxylase to acetyl-CoA to form malonyl-CoA. The sequence is that of Acetyl-coenzyme A carboxylase carboxyl transferase subunit beta from Flavobacteriaceae bacterium (strain 3519-10).